Reading from the N-terminus, the 122-residue chain is Large ribosomal subunit protein uL14 (122 aa).

Belongs to the universal ribosomal protein uL14 family. As to quaternary structure, part of the 50S ribosomal subunit. Forms a cluster with proteins L3 and L19. In the 70S ribosome, L14 and L19 interact and together make contacts with the 16S rRNA in bridges B5 and B8.

Binds to 23S rRNA. Forms part of two intersubunit bridges in the 70S ribosome. The sequence is that of Large ribosomal subunit protein uL14 from Shewanella woodyi (strain ATCC 51908 / MS32).